The chain runs to 260 residues: 3'-5' ssDNA/RNA exonuclease TatD (260 aa).

Glutamate 91, histidine 127, and histidine 152 together coordinate a divalent metal cation.

It belongs to the metallo-dependent hydrolases superfamily. TatD-type hydrolase family. TatD subfamily. As to quaternary structure, monomer. Requires Mg(2+) as cofactor.

Its subcellular location is the cytoplasm. Its function is as follows. 3'-5' exonuclease that prefers single-stranded DNA and RNA. May play a role in the H(2)O(2)-induced DNA damage repair. This chain is 3'-5' ssDNA/RNA exonuclease TatD, found in Citrobacter koseri (strain ATCC BAA-895 / CDC 4225-83 / SGSC4696).